A 284-amino-acid chain; its full sequence is Shikimate kinase (284 aa).

Position 85–95 (85–95 (PLAAGLKSSSA)) interacts with ATP.

The protein belongs to the GHMP kinase family. Archaeal shikimate kinase subfamily.

It is found in the cytoplasm. The catalysed reaction is shikimate + ATP = 3-phosphoshikimate + ADP + H(+). It participates in metabolic intermediate biosynthesis; chorismate biosynthesis; chorismate from D-erythrose 4-phosphate and phosphoenolpyruvate: step 5/7. The polypeptide is Shikimate kinase (Halobacterium salinarum (strain ATCC 29341 / DSM 671 / R1)).